We begin with the raw amino-acid sequence, 230 residues long: Large ribosomal subunit protein uL1 (230 aa).

The protein belongs to the universal ribosomal protein uL1 family. In terms of assembly, part of the 50S ribosomal subunit.

In terms of biological role, binds directly to 23S rRNA. The L1 stalk is quite mobile in the ribosome, and is involved in E site tRNA release. Functionally, protein L1 is also a translational repressor protein, it controls the translation of the L11 operon by binding to its mRNA. This Acidiphilium cryptum (strain JF-5) protein is Large ribosomal subunit protein uL1.